A 216-amino-acid polypeptide reads, in one-letter code: Probable nicotinate-nucleotide adenylyltransferase (216 aa).

It belongs to the NadD family.

The enzyme catalyses nicotinate beta-D-ribonucleotide + ATP + H(+) = deamido-NAD(+) + diphosphate. The protein operates within cofactor biosynthesis; NAD(+) biosynthesis; deamido-NAD(+) from nicotinate D-ribonucleotide: step 1/1. Catalyzes the reversible adenylation of nicotinate mononucleotide (NaMN) to nicotinic acid adenine dinucleotide (NaAD). This is Probable nicotinate-nucleotide adenylyltransferase from Shewanella baltica (strain OS223).